A 1064-amino-acid polypeptide reads, in one-letter code: WD repeat-containing protein on Y chromosome (1064 aa).

WD repeat units follow at residues Glu-153–Ala-197, Arg-326–Ala-365, Gly-369–Thr-408, Thr-459–Ile-498, Ile-511–Asn-550, Phe-598–Ser-638, Lys-746–Lys-785, and Ala-827–Leu-866. Residues Pro-914–Glu-924 show a composition bias toward basic and acidic residues. Disordered stretches follow at residues Pro-914–Asp-935 and Gly-1023–Glu-1064. The span at Asp-925–Asp-935 shows a compositional bias: acidic residues.

The protein is WD repeat-containing protein on Y chromosome of Drosophila pseudoobscura pseudoobscura (Fruit fly).